A 185-amino-acid polypeptide reads, in one-letter code: Ribosome-recycling factor (185 aa).

Residues Asp-145–Thr-164 are disordered.

The protein belongs to the RRF family.

The protein resides in the cytoplasm. In terms of biological role, responsible for the release of ribosomes from messenger RNA at the termination of protein biosynthesis. May increase the efficiency of translation by recycling ribosomes from one round of translation to another. The polypeptide is Ribosome-recycling factor (Mycobacterium sp. (strain JLS)).